The sequence spans 230 residues: Ephrin-A3 (230 aa).

The signal sequence occupies residues 1–22 (MAAAPLLLLLLLVPVPLLPLLA). The Ephrin RBD domain maps to 30-161 (GNRHAVYWNS…RMKVFVCCAS (132 aa)). Residues Asn-38, Asn-67, Asn-84, and Asn-92 are each glycosylated (N-linked (GlcNAc...) asparagine). 2 cysteine pairs are disulfide-bonded: Cys-63–Cys-102 and Cys-91–Cys-150. Gly-206 carries the GPI-anchor amidated glycine lipid modification. A propeptide spans 207–230 (TSPKREHLPLAVGIAFFLMTLLAS) (removed in mature form).

The protein belongs to the ephrin family. As to quaternary structure, interacts with EPHA8; activates EPHA8. Expressed in myogenic progenitor cells.

It localises to the cell membrane. Its function is as follows. Cell surface GPI-bound ligand for Eph receptors, a family of receptor tyrosine kinases which are crucial for migration, repulsion and adhesion during neuronal, vascular and epithelial development. Binds promiscuously Eph receptors residing on adjacent cells, leading to contact-dependent bidirectional signaling into neighboring cells. The signaling pathway downstream of the receptor is referred to as forward signaling while the signaling pathway downstream of the ephrin ligand is referred to as reverse signaling. This chain is Ephrin-A3 (Efna3), found in Mus musculus (Mouse).